Consider the following 529-residue polypeptide: 1,4-beta-D-glucan cellobiohydrolase xynA (529 aa).

The N-terminal stretch at 1–25 (MSALNSFNMYKSALILGSLLATAGA) is a signal peptide. The segment at 26–456 (QQIGTYTAET…SDIKVGPFNS (431 aa)) is catalytic. N70 and N219 each carry an N-linked (GlcNAc...) asparagine glycan. Catalysis depends on E234, which acts as the Nucleophile. The Proton donor role is filled by E239. N413 is a glycosylation site (N-linked (GlcNAc...) asparagine). Residues 413 to 438 (NETGTPGAARGSCPTTSGNPKTVESQ) are disordered. Polar residues predominate over residues 425–438 (CPTTSGNPKTVESQ). N455 carries an N-linked (GlcNAc...) asparagine glycan. Residues 457-493 (TFSGGTSTGGSTTTTASGTTSTKASTTSTSSTSTGTG) are thr-rich linker. Residues 460–491 (GGTSTGGSTTTTASGTTSTKASTTSTSSTSTG) are disordered. Positions 493–529 (GVAAHWGQCGGQGWTGPTTCASGTTCTVVNPYYSQCL) constitute a CBM1 domain. 2 cysteine pairs are disulfide-bonded: C501–C518 and C512–C528.

It belongs to the glycosyl hydrolase 7 (cellulase C) family.

It localises to the secreted. The catalysed reaction is Hydrolysis of (1-&gt;4)-beta-D-glucosidic linkages in cellulose and cellotetraose, releasing cellobiose from the non-reducing ends of the chains.. Cellobiose inhibits xynA at high concentrations. The biological conversion of cellulose to glucose generally requires three types of hydrolytic enzymes: (1) Endoglucanases which cut internal beta-1,4-glucosidic bonds; (2) Exocellobiohydrolases that cut the disaccharide cellobiose from the non-reducing end of the cellulose polymer chain; (3) Beta-1,4-glucosidases which hydrolyze the cellobiose and other short cello-oligosaccharides to glucose. This is 1,4-beta-D-glucan cellobiohydrolase xynA (xynA) from Talaromyces funiculosus (Fruitlet core rot fungus).